The sequence spans 258 residues: GTP cyclohydrolase FolE2 (258 aa).

The protein belongs to the GTP cyclohydrolase IV family.

The catalysed reaction is GTP + H2O = 7,8-dihydroneopterin 3'-triphosphate + formate + H(+). It functions in the pathway cofactor biosynthesis; 7,8-dihydroneopterin triphosphate biosynthesis; 7,8-dihydroneopterin triphosphate from GTP: step 1/1. Functionally, converts GTP to 7,8-dihydroneopterin triphosphate. This is GTP cyclohydrolase FolE2 from Geobacter sulfurreducens (strain ATCC 51573 / DSM 12127 / PCA).